Consider the following 178-residue polypeptide: Protein GrpE (178 aa).

The protein belongs to the GrpE family. In terms of assembly, homodimer.

Its subcellular location is the cytoplasm. In terms of biological role, participates actively in the response to hyperosmotic and heat shock by preventing the aggregation of stress-denatured proteins, in association with DnaK and GrpE. It is the nucleotide exchange factor for DnaK and may function as a thermosensor. Unfolded proteins bind initially to DnaJ; upon interaction with the DnaJ-bound protein, DnaK hydrolyzes its bound ATP, resulting in the formation of a stable complex. GrpE releases ADP from DnaK; ATP binding to DnaK triggers the release of the substrate protein, thus completing the reaction cycle. Several rounds of ATP-dependent interactions between DnaJ, DnaK and GrpE are required for fully efficient folding. The chain is Protein GrpE from Rickettsia africae (strain ESF-5).